The primary structure comprises 359 residues: Probable mannitol dehydrogenase (359 aa).

Zn(2+) contacts are provided by Cys-50, His-72, Cys-103, Cys-106, Cys-109, Cys-117, and Cys-165.

The protein belongs to the zinc-containing alcohol dehydrogenase family. Zn(2+) serves as cofactor.

The catalysed reaction is D-mannitol + NAD(+) = D-mannose + NADH + H(+). In terms of biological role, oxidizes mannitol to mannose. Provides the initial step by which translocated mannitol is committed to central metabolism and, by regulating mannitol pool size, is important in regulating salt tolerance at the cellular level. The protein is Probable mannitol dehydrogenase (CAD1) of Medicago sativa (Alfalfa).